The chain runs to 109 residues: LSM2-LSM8 complex subunit LSM8 (109 aa).

The Sm domain maps to 1–70; it reads MSATLKDYLN…IALVGLIDAE (70 aa).

This sequence belongs to the snRNP Sm proteins family. Component of the heptameric LSM2-LSM8 complex that forms a seven-membered ring structure with a donut shape; an RNA strand can pass through the hole in the center of the ring structure. The LSm subunits are arranged in the order LSM8, LSM2, LSM3, LSM6, LSM5, LSM7 and LSM4. Component of the spliceosome U4/U6-U5 tri-snRNP complex composed of the U4, U6 and U5 snRNAs and at least PRP3, PRP4, PRP6, PRP8, PRP18, PRP31, PRP38, SNU13, SNU23, SNU66, SNU114, SPP381, SMB1, SMD1, SMD2, SMD3, SMX2, SMX3, LSM2, LSM3, LSM4, LSM5, LSM6, LSM7, LSM8, BRR2 and DIB1.

It localises to the nucleus. The protein resides in the cytoplasm. Its function is as follows. Component of the nuclear LSM2-LSM8 complex, which is involved in spliceosome assembly. The LSM2-LSM8 complex plays a role in the biogenesis of the spliceosomal U4/U6-U5 tri-snRNP complex by accelerating PRP24-mediated annealing of U4/U6 di-snRNA. The LSM2-LSM8 complex binds U6 snRNA terminating with a non-cyclic 3' phosphate group. LSM2-LSM8 is probably also involved in degradation of nuclear pre-mRNA by targeting them for decapping. LSM2-LSM8 could be involved in processing of pre-tRNAs, pre-rRNAs and U3 snoRNA, although involvement may be indirect. The sequence is that of LSM2-LSM8 complex subunit LSM8 (LSM8) from Saccharomyces cerevisiae (strain ATCC 204508 / S288c) (Baker's yeast).